The sequence spans 373 residues: Dual-specificity RNA methyltransferase RlmN (373 aa).

Glutamate 94 acts as the Proton acceptor in catalysis. Residues 100–339 (EDDRATLCVS…VTIRKTRGDD (240 aa)) form the Radical SAM core domain. Cysteine 107 and cysteine 344 form a disulfide bridge. Positions 114, 118, and 121 each coordinate [4Fe-4S] cluster. Residues 168–169 (GE), serine 200, 222–224 (SLH), and asparagine 301 contribute to the S-adenosyl-L-methionine site. Cysteine 344 acts as the S-methylcysteine intermediate in catalysis.

It belongs to the radical SAM superfamily. RlmN family. Requires [4Fe-4S] cluster as cofactor.

Its subcellular location is the cytoplasm. It carries out the reaction adenosine(2503) in 23S rRNA + 2 reduced [2Fe-2S]-[ferredoxin] + 2 S-adenosyl-L-methionine = 2-methyladenosine(2503) in 23S rRNA + 5'-deoxyadenosine + L-methionine + 2 oxidized [2Fe-2S]-[ferredoxin] + S-adenosyl-L-homocysteine. The catalysed reaction is adenosine(37) in tRNA + 2 reduced [2Fe-2S]-[ferredoxin] + 2 S-adenosyl-L-methionine = 2-methyladenosine(37) in tRNA + 5'-deoxyadenosine + L-methionine + 2 oxidized [2Fe-2S]-[ferredoxin] + S-adenosyl-L-homocysteine. Specifically methylates position 2 of adenine 2503 in 23S rRNA and position 2 of adenine 37 in tRNAs. m2A2503 modification seems to play a crucial role in the proofreading step occurring at the peptidyl transferase center and thus would serve to optimize ribosomal fidelity. The protein is Dual-specificity RNA methyltransferase RlmN of Vibrio cholerae serotype O1 (strain M66-2).